Consider the following 569-residue polypeptide: Urease subunit alpha (569 aa).

The Urease domain maps to 131-569 (GGMDAHIHFI…LPMAQRYFLF (439 aa)). 3 residues coordinate Ni(2+): His136, His138, and Lys218. Lys218 carries the N6-carboxylysine modification. His220 provides a ligand contact to substrate. Ni(2+)-binding residues include His247 and His273. His321 acts as the Proton donor in catalysis. Asp361 is a Ni(2+) binding site.

Belongs to the metallo-dependent hydrolases superfamily. Urease alpha subunit family. In terms of assembly, heterotrimer of UreA (gamma), UreB (beta) and UreC (alpha) subunits. Three heterotrimers associate to form the active enzyme. It depends on Ni cation as a cofactor. Post-translationally, carboxylation allows a single lysine to coordinate two nickel ions.

The protein resides in the cytoplasm. It carries out the reaction urea + 2 H2O + H(+) = hydrogencarbonate + 2 NH4(+). It participates in nitrogen metabolism; urea degradation; CO(2) and NH(3) from urea (urease route): step 1/1. The protein is Urease subunit alpha of Rhizobium rhizogenes (strain K84 / ATCC BAA-868) (Agrobacterium radiobacter).